The chain runs to 284 residues: F-box protein PP2-B5 (284 aa).

One can recognise an F-box domain in the interval 32 to 80 (ASFDDLPDDCLAIISSFTSTPRDAFLAALVSKSFGLQFNSDSVWEKFLP).

This Arabidopsis thaliana (Mouse-ear cress) protein is F-box protein PP2-B5 (PP2B5).